A 304-amino-acid chain; its full sequence is Histone H1.8 (304 aa).

Residues 1–24 show a composition bias toward low complexity; sequence MAPGSVSSVSSSSFPSRDTSPSGS. Disordered stretches follow at residues 1–38, 110–248, and 270–304; these read MAPGSVSSVSSSSFPSRDTSPSGSCGLPGADKPGPSCR, SKAK…NSVA, and TVQETKVPTPSQDIGHKVQPIPRVRKAKTPENTQA. One can recognise an H15 domain in the interval 45–123; sequence RNPTMLHMVL…GATGSFKLVP (79 aa). Residues 132–144 are compositionally biased toward low complexity; it reads APKAGRGAAGAKE. Basic and acidic residues-rich tracts occupy residues 153–166, 189–202, and 225–237; these read LKKDQVGKATMEKG, KPKEVRKAPLKQDK, and ANAHGKTKGEKSK. The Nuclear localization signal signature appears at 154-170; sequence KKDQVGKATMEKGQKRR. Residues 270 to 281 are compositionally biased toward polar residues; the sequence is TVQETKVPTPSQ.

Belongs to the histone H1/H5 family. As to expression, oocyte-specific.

It is found in the cytoplasm. It localises to the nucleus. Its subcellular location is the chromosome. In terms of biological role, may play a key role in the control of gene expression during oogenesis and early embryogenesis, presumably through the perturbation of chromatin structure. Essential for meiotic maturation of germinal vesicle-stage oocytes. The somatic type linker histone H1c is rapidly replaced by H1oo in a donor nucleus transplanted into an oocyte. The greater mobility of H1oo as compared to H1c may contribute to this rapid replacement and increased instability of the embryonic chromatin structure. The rapid replacement of H1c with H1oo may play an important role in nuclear remodeling. This chain is Histone H1.8, found in Mus musculus (Mouse).